The chain runs to 294 residues: Early 4 ORF6 protein (294 aa).

The Nuclear localization signal signature appears at 239 to 255 (ARRTRRLMLRAVRIIAE).

Belongs to the adenoviridae E4 30 to 34 kDa protein family. In terms of assembly, interacts with E1B-55k.

It localises to the host nucleus. The protein localises to the host cytoplasm. Its function is as follows. Plays a major role to prevent cellular inhibition of viral genome replication by nuclear bodies. Assembles an SCF-like E3 ubiquitin ligase complex based on the cellular proteins ELOB, ELOC, CUL5 and RBX1, in cooperation with viral E1B-55K. This viral RING-type ligase ubiquitinates cellular substrates prior to proteasomal degradation: p53/TP53, LIG4, MRE11-RAD50-NBS1 (MRN) complex, ITGA3, DAXX and BLM. The sequence is that of Early 4 ORF6 protein from Homo sapiens (Human).